We begin with the raw amino-acid sequence, 468 residues long: 6-phospho-beta-galactosidase (468 aa).

5 residues coordinate D-galactose 6-phosphate: Gln19, His116, Asn159, Glu160, and Asn297. Glu160 functions as the Proton donor in the catalytic mechanism. Glu375 acts as the Nucleophile in catalysis. Residues Ser428, Trp429, Lys435, and Tyr437 each contribute to the D-galactose 6-phosphate site.

It belongs to the glycosyl hydrolase 1 family.

It catalyses the reaction a 6-phospho-beta-D-galactoside + H2O = D-galactose 6-phosphate + an alcohol. It functions in the pathway carbohydrate metabolism; lactose degradation; D-galactose 6-phosphate and beta-D-glucose from lactose 6-phosphate: step 1/1. The sequence is that of 6-phospho-beta-galactosidase from Streptococcus pyogenes serotype M4 (strain MGAS10750).